An 847-amino-acid chain; its full sequence is Alanine--tRNA ligase (847 aa).

Residues His554, His558, Cys656, and His660 each contribute to the Zn(2+) site.

It belongs to the class-II aminoacyl-tRNA synthetase family. Zn(2+) is required as a cofactor.

The protein resides in the cytoplasm. The enzyme catalyses tRNA(Ala) + L-alanine + ATP = L-alanyl-tRNA(Ala) + AMP + diphosphate. Functionally, catalyzes the attachment of alanine to tRNA(Ala) in a two-step reaction: alanine is first activated by ATP to form Ala-AMP and then transferred to the acceptor end of tRNA(Ala). Also edits incorrectly charged Ser-tRNA(Ala) and Gly-tRNA(Ala) via its editing domain. The chain is Alanine--tRNA ligase from Helicobacter pylori (strain HPAG1).